A 173-amino-acid polypeptide reads, in one-letter code: Alpha-crystallin A chain (173 aa).

Residue Met-1 is modified to N-acetylmethionine. Residues 1–63 (MDVTIQHPWF…RTVLDSGISE (63 aa)) are required for complex formation with BFSP1 and BFSP2. Gln-6 carries the deamidated glutamine; partial modification. At Ser-45 the chain carries Phosphoserine. Residue Gln-50 is modified to Deamidated glutamine; partial. In terms of domain architecture, sHSP spans 52 to 162 (LFRTVLDSGI…GHSERAIPVS (111 aa)). Lys-70 bears the N6-acetyllysine mark. The residue at position 90 (Gln-90) is a Deamidated glutamine; partial. Residue Lys-99 is modified to N6-acetyllysine. A Zn(2+)-binding site is contributed by His-100. Asn-101 carries the deamidated asparagine; partial modification. Zn(2+) contacts are provided by Glu-102 and His-107. Ser-122 is subject to Phosphoserine. A Deamidated asparagine; partial modification is found at Asn-123. Residues 145–173 (KVQSGLDAGHSERAIPVSREEKPSSAPSS) are disordered. Residue Gln-147 is modified to Deamidated glutamine; partial. Residues 153-167 (GHSERAIPVSREEKP) are compositionally biased toward basic and acidic residues. Residue His-154 participates in Zn(2+) binding. Ser-162 is a glycosylation site (O-linked (GlcNAc) serine).

This sequence belongs to the small heat shock protein (HSP20) family. As to quaternary structure, heteromer composed of three CRYAA and one CRYAB subunits. Inter-subunit bridging via zinc ions enhances stability, which is crucial as there is no protein turn over in the lens. Can also form homodimers and homotetramers (dimers of dimers) which serve as the building blocks of homooligomers. Within homooligomers, the zinc-binding motif is created from residues of 3 different molecules. His-100 and Glu-102 from one molecule are ligands of the zinc ion, and His-107 and His-154 residues from additional molecules complete the site with tetrahedral coordination geometry. Part of a complex required for lens intermediate filament formation composed of BFSP1, BFSP2 and CRYAA. Post-translationally, acetylation at Lys-70 may increase chaperone activity. In terms of processing, undergoes age-dependent proteolytical cleavage at the C-terminus.

Its subcellular location is the cytoplasm. It localises to the nucleus. Its function is as follows. Contributes to the transparency and refractive index of the lens. Acts as a chaperone, preventing aggregation of various proteins under a wide range of stress conditions. Required for the correct formation of lens intermediate filaments as part of a complex composed of BFSP1, BFSP2 and CRYAA. The chain is Alpha-crystallin A chain (CRYAA) from Oryctolagus cuniculus (Rabbit).